A 205-amino-acid chain; its full sequence is Pyrrolidone-carboxylate peptidase (205 aa).

Residues Glu79, Cys142, and His165 contribute to the active site.

The protein belongs to the peptidase C15 family. Homotetramer.

It is found in the cytoplasm. The enzyme catalyses Release of an N-terminal pyroglutamyl group from a polypeptide, the second amino acid generally not being Pro.. Functionally, removes 5-oxoproline from various penultimate amino acid residues except L-proline. The sequence is that of Pyrrolidone-carboxylate peptidase from Gloeobacter violaceus (strain ATCC 29082 / PCC 7421).